The following is a 155-amino-acid chain: Polyadenylate-binding protein-interacting protein 5 (155 aa).

The PAM2-like motif lies at 7 to 17 (ALNPHAASYVP). The region spanning 66 to 109 (DIDMDIEYLLVTFSGLSQESITDVYLANGGDLEATIEMLNQLEI) is the CUE domain. A disordered region spans residues 114–155 (SEENLPETLDIGDISESGPSTSKSTEVAASTSSVIPNAPVSA). Over residues 130-148 (SGPSTSKSTEVAASTSSVI) the composition is skewed to polar residues.

Specifically expressed in immature siliques.

Promotes polyploidy in dark-grown seedlings. Regulates the endocycle leading to hypocotyl elongation. This Arabidopsis thaliana (Mouse-ear cress) protein is Polyadenylate-binding protein-interacting protein 5 (CID5).